The primary structure comprises 275 residues: Shikimate dehydrogenase (NADP(+)) (275 aa).

Shikimate is bound by residues 15-17 (SKS) and Thr62. Lys66 acts as the Proton acceptor in catalysis. Glu78 is an NADP(+) binding site. Residues Asn87 and Asp102 each contribute to the shikimate site. NADP(+) contacts are provided by residues 128 to 132 (GAGGA), 151 to 156 (NRTAEK), and Leu218. Tyr220 contacts shikimate. NADP(+) is bound at residue Gly241.

The protein belongs to the shikimate dehydrogenase family. In terms of assembly, homodimer.

It catalyses the reaction shikimate + NADP(+) = 3-dehydroshikimate + NADPH + H(+). It functions in the pathway metabolic intermediate biosynthesis; chorismate biosynthesis; chorismate from D-erythrose 4-phosphate and phosphoenolpyruvate: step 4/7. Involved in the biosynthesis of the chorismate, which leads to the biosynthesis of aromatic amino acids. Catalyzes the reversible NADPH linked reduction of 3-dehydroshikimate (DHSA) to yield shikimate (SA). The sequence is that of Shikimate dehydrogenase (NADP(+)) from Shouchella clausii (strain KSM-K16) (Alkalihalobacillus clausii).